The primary structure comprises 1416 residues: 1-phosphatidylinositol 4,5-bisphosphate phosphodiesterase eta-2 (1416 aa).

The tract at residues 1–155 is necessary for plasma membrane localization; sequence MSGPWPSPDS…WVTGLRYLMA (155 aa). Residues 47 to 155 form the PH domain; sequence GAMQEGMQMV…WVTGLRYLMA (109 aa). EF-hand domains follow at residues 169 to 204 and 205 to 241; these read TRDQ…LNVN and LPRQ…MSTR. Positions 182, 184, 186, 188, and 193 each coordinate Ca(2+). Positions 326-471 constitute a PI-PLC X-box domain; sequence QDMTQPLSHY…LKGKILVKGK (146 aa). His341 is an active-site residue. 3 residues coordinate Ca(2+): Asn342, Glu371, and Asp373. Residue His385 is part of the active site. Glu420 lines the Ca(2+) pocket. Positions 469 and 471 each coordinate substrate. A phosphoserine mark is found at Ser487 and Ser491. The tract at residues 535-620 is disordered; that stretch reads DPNNFSVSTL…RGATRQKKTM (86 aa). Residues 537 to 546 are compositionally biased toward polar residues; that stretch reads NNFSVSTLSP. A compositionally biased stretch (basic residues) spans 581-592; the sequence is SRRKKKGSKLKK. Phosphoserine occurs at positions 595 and 605. Residues 626–740 form the PI-PLC Y-box domain; it reads LSDLVKYTKS…GYVLKPGCMC (115 aa). The substrate site is built by Ser653 and Arg680. Residues 740–869 form the C2 domain; it reads CQGVFNPNSE…PGYRHVYLEG (130 aa). Residues Ile784, Asp786, Asp810, Asp839, His840, and Asp841 each contribute to the Ca(2+) site. Disordered stretches follow at residues 905 to 1109, 1121 to 1222, and 1315 to 1405; these read GSLD…GGWR, YSDA…LQPR, and ITSP…GPAS. The span at 1011–1021 shows a compositional bias: pro residues; that stretch reads APGPGPPPPAA. Residues 1073 to 1083 show a composition bias toward polar residues; that stretch reads GSQTDGRSQPR. Positions 1143-1166 are enriched in low complexity; sequence VSSSSSMSSSDTVIDLSLPSLGLG. Polar residues predominate over residues 1199–1208; sequence KSKSNPNLRA. Residues 1324–1333 are compositionally biased toward gly residues; the sequence is AGEGVAGGPG.

Ca(2+) is required as a cofactor. In terms of tissue distribution, expressed in retina and kidney.

Its subcellular location is the cytoplasm. It localises to the cell membrane. It catalyses the reaction a 1,2-diacyl-sn-glycero-3-phospho-(1D-myo-inositol-4,5-bisphosphate) + H2O = 1D-myo-inositol 1,4,5-trisphosphate + a 1,2-diacyl-sn-glycerol + H(+). With respect to regulation, activity is stimulated by GNB1:GNG2. The production of the second messenger molecules diacylglycerol (DAG) and inositol 1,4,5-trisphosphate (IP3) is mediated by activated phosphatidylinositol-specific phospholipase C enzymes. This phospholipase activity is very sensitive to calcium. May be important for formation and maintenance of the neuronal network in the postnatal brain. The chain is 1-phosphatidylinositol 4,5-bisphosphate phosphodiesterase eta-2 from Homo sapiens (Human).